A 141-amino-acid polypeptide reads, in one-letter code: Transcriptional regulator MraZ (141 aa).

SpoVT-AbrB domains are found at residues 5–47 (TFNI…KPQD) and 76–119 (ANFV…DKKL).

This sequence belongs to the MraZ family. In terms of assembly, homooctamer. Forms a ring.

It localises to the cytoplasm. Its subcellular location is the nucleoid. The sequence is that of Transcriptional regulator MraZ from Mycoplasma pneumoniae (strain ATCC 29342 / M129 / Subtype 1) (Mycoplasmoides pneumoniae).